We begin with the raw amino-acid sequence, 631 residues long: MRAGRVRPLRASDMKKDVRILLVGEPRVGKTSLIMSLVSEEFPEEVPPRAEEITIPADVTPERVPTHIVDYSEAEQSDEQLHQEISQANVICIVYAVNNKHSIDKVTSRWIPLINERTDKDSRLPLILVGNKSDLVEYSSMETILPIMNQYTEIETCVECSAKNLKNISELFYYAQKAVLHPTGPLYCPEEKEMKPACIKALTRIFKISDQDNDGTLNDAELNFFQRICFNTPLAPQALEDVKNVVRKHLSDGVADSGLTLRGFLFLHTLFIQRGRHETTWTVLRRFGYDDDLDLTPEYLFPLLKIPPDCTTELNHHAYLFLQSTFDKHDLDRDCALSPDELKDLFQVFPYIPWGPDVNNTVCTNESGWITYQGFLSQWTLTTYLDVQRCLEYLGYLGYSILTEQESQASAITVTRDKKIDLQKKQTQRNVFRCNVIGVKGCGKTGVLQSLLGRNLMRQKKIRDDHKSYYAINTVYVYGQEKYLLLHDISESEFLTEAEIVCDVVCLVYDVTNPKSFEYCARIFKQHFMDSRIPCLIVAAKSDLHEVKQEHSVSPTDFCRKHKMPPPQAFTCNTADAPSKDIFVKLTTMAMYPHVTQADLKSSTFWLRASFGATVFAVVGFAMYRALLKQR.

At methionine 1–phenylalanine 605 the chain is on the cytoplasmic side. The region spanning lysine 15–histidine 181 is the Miro 1 domain. GTP-binding residues include arginine 27, glycine 29, lysine 30, threonine 31, and serine 32. Threonine 31 is a binding site for Mg(2+). Aspartate 70 provides a ligand contact to Mg(2+). Serine 72 lines the GTP pocket. Lysine 105 is modified (N6-acetyllysine). Positions 131, 132, 134, 162, and 163 each coordinate GTP. Residue lysine 166 forms a Glycyl lysine isopeptide (Lys-Gly) (interchain with G-Cter in ubiquitin) linkage. The EF-hand 1 domain maps to alanine 197–threonine 232. Ca(2+) contacts are provided by aspartate 210, aspartate 212, aspartate 214, threonine 216, and glutamate 221. Lysine 248 is covalently cross-linked (Glycyl lysine isopeptide (Lys-Gly) (interchain with G-Cter in ubiquitin)). Residues histidine 317 to isoleucine 352 form the EF-hand 2 domain. Positions 330, 332, 334, 336, and 341 each coordinate Ca(2+). Residues arginine 429–tyrosine 592 enclose the Miro 2 domain. Residues glycine 441, cysteine 442, glycine 443, lysine 444, threonine 445, glycine 446, lysine 460, lysine 541, aspartate 543, threonine 571, and cysteine 572 each contribute to the GTP site. Glycine 441 is a binding site for Mg(2+). Residue lysine 585 forms a Glycyl lysine isopeptide (Lys-Gly) (interchain with G-Cter in ubiquitin) linkage. A helical; Anchor for type IV membrane protein transmembrane segment spans residues tryptophan 606–leucine 628. Over lysine 629 to arginine 631 the chain is Mitochondrial intermembrane.

The protein belongs to the mitochondrial Rho GTPase family. In terms of assembly, homodimer. Interacts with the kinesin-binding proteins TRAK1/OIP106 and TRAK2/GRIF1, forming a link between mitochondria and the trafficking apparatus of the microtubules. Interacts with RAP1GDS1. Interacts with ARMCX1. Found in a complex with KIF5B, OGT, RHOT2 and TRAK1. Ubiquitinated by PRKN during mitophagy, leading to its degradation and enhancement of mitophagy. Deubiquitinated by USP30. In terms of processing, acetylation on Lys-105 decreases sensitivity of mitochondrial transport to elevated Ca(2+) levels, increases mitochondrial transport and promotes axon growth. Deacetylated by HDAC6 which blocks mitochondrial transport and mediates axon growth inhibition.

The protein resides in the mitochondrion outer membrane. It catalyses the reaction GTP + H2O = GDP + phosphate + H(+). The catalysed reaction is ATP + H2O = ADP + phosphate + H(+). The enzyme catalyses UTP + H2O = UDP + phosphate + H(+). Functionally, atypical mitochondrial nucleoside-triphosphatase (NTPase) involved in mitochondrial trafficking. Probably involved in control of anterograde transport of mitochondria and their subcellular distribution. Promotes mitochondrial fission during high calcium conditions. Can hydrolyze GTP, ATP and UTP. The sequence is that of Mitochondrial Rho GTPase from Rattus norvegicus (Rat).